A 417-amino-acid polypeptide reads, in one-letter code: Phosphoglycerate kinase 2 (417 aa).

Residues valine 23, aspartate 24, phenylalanine 25, asparagine 26, asparagine 38, arginine 39, serine 62, histidine 63, glycine 65, arginine 66, leucine 121, arginine 122, histidine 168, and arginine 169 each contribute to the (2R)-3-phosphoglycerate site. Residue glycine 212 participates in ADP binding. Glycine 212 is a binding site for CDP. 2 residues coordinate AMP: alanine 213 and lysine 214. Residue alanine 213 coordinates ATP. Alanine 213 contacts Mg(2+). Aspartate 217 contacts CDP. Mg(2+) is bound at residue aspartate 217. Lysine 218 is a binding site for AMP. Residue lysine 218 coordinates ATP. Glycine 236 provides a ligand contact to ADP. Position 236 (glycine 236) interacts with CDP. Residues glycine 237 and glycine 312 each contribute to the AMP site. ATP is bound by residues glycine 237 and glycine 312. Residues glycine 337 and phenylalanine 342 each coordinate CDP. Phenylalanine 342 provides a ligand contact to ADP. AMP is bound at residue glutamate 343. Glutamate 343, aspartate 374, and threonine 375 together coordinate ATP. Aspartate 374 serves as a coordination point for Mg(2+).

The protein belongs to the phosphoglycerate kinase family. In terms of assembly, monomer. Requires Mg(2+) as cofactor.

It is found in the cytoplasm. The protein localises to the mitochondrion. The enzyme catalyses (2R)-3-phosphoglycerate + ATP = (2R)-3-phospho-glyceroyl phosphate + ADP. Its pathway is carbohydrate degradation; glycolysis; pyruvate from D-glyceraldehyde 3-phosphate: step 2/5. In terms of biological role, catalyzes one of the two ATP producing reactions in the glycolytic pathway via the reversible conversion of 1,3-diphosphoglycerate to 3-phosphoglycerate. Both L- and D- forms of purine and pyrimidine nucleotides can be used as substrates, but the activity is much lower on pyrimidines. Negatively regulates the biosynthesis of acetyl-CoA from pyruvate in the mitochondrion. The protein is Phosphoglycerate kinase 2 (PGK2) of Rhizopus niveus.